A 423-amino-acid polypeptide reads, in one-letter code: Histidine--tRNA ligase (423 aa).

This sequence belongs to the class-II aminoacyl-tRNA synthetase family. Homodimer.

The protein resides in the cytoplasm. It catalyses the reaction tRNA(His) + L-histidine + ATP = L-histidyl-tRNA(His) + AMP + diphosphate + H(+). This is Histidine--tRNA ligase from Rhodococcus jostii (strain RHA1).